Consider the following 101-residue polypeptide: Large ribosomal subunit protein uL23 (101 aa).

Belongs to the universal ribosomal protein uL23 family. As to quaternary structure, part of the 50S ribosomal subunit. Contacts protein L29, and trigger factor when it is bound to the ribosome.

One of the early assembly proteins it binds 23S rRNA. One of the proteins that surrounds the polypeptide exit tunnel on the outside of the ribosome. Forms the main docking site for trigger factor binding to the ribosome. The sequence is that of Large ribosomal subunit protein uL23 from Rhodococcus jostii (strain RHA1).